Reading from the N-terminus, the 444-residue chain is Methylenetetrahydrofolate--tRNA-(uracil-5-)-methyltransferase TrmFO (444 aa).

Residue 9–14 (GAGMAG) coordinates FAD.

It belongs to the MnmG family. TrmFO subfamily. It depends on FAD as a cofactor.

It localises to the cytoplasm. The catalysed reaction is uridine(54) in tRNA + (6R)-5,10-methylene-5,6,7,8-tetrahydrofolate + NADH + H(+) = 5-methyluridine(54) in tRNA + (6S)-5,6,7,8-tetrahydrofolate + NAD(+). It catalyses the reaction uridine(54) in tRNA + (6R)-5,10-methylene-5,6,7,8-tetrahydrofolate + NADPH + H(+) = 5-methyluridine(54) in tRNA + (6S)-5,6,7,8-tetrahydrofolate + NADP(+). Its function is as follows. Catalyzes the folate-dependent formation of 5-methyl-uridine at position 54 (M-5-U54) in all tRNAs. The chain is Methylenetetrahydrofolate--tRNA-(uracil-5-)-methyltransferase TrmFO from Cereibacter sphaeroides (strain KD131 / KCTC 12085) (Rhodobacter sphaeroides).